The following is a 323-amino-acid chain: DNA-directed RNA polymerase subunit alpha (323 aa).

The segment at Met1–Asn225 is alpha N-terminal domain (alpha-NTD). Positions Pro243 to Ser323 are alpha C-terminal domain (alpha-CTD).

This sequence belongs to the RNA polymerase alpha chain family. Homodimer. The RNAP catalytic core consists of 2 alpha, 1 beta, 1 beta' and 1 omega subunit. When a sigma factor is associated with the core the holoenzyme is formed, which can initiate transcription.

The enzyme catalyses RNA(n) + a ribonucleoside 5'-triphosphate = RNA(n+1) + diphosphate. In terms of biological role, DNA-dependent RNA polymerase catalyzes the transcription of DNA into RNA using the four ribonucleoside triphosphates as substrates. This chain is DNA-directed RNA polymerase subunit alpha, found in Roseiflexus castenholzii (strain DSM 13941 / HLO8).